A 962-amino-acid polypeptide reads, in one-letter code: UvrABC system protein A (962 aa).

Residue 38 to 45 coordinates ATP; it reads GISGSGKS. 2 ABC transporter domains span residues 319 to 597 and 617 to 944; these read WSKS…PDSL and PSGR…RFLR. 649 to 656 lines the ATP pocket; it reads GVSGSGKS. The C4-type zinc-finger motif lies at 748 to 774; sequence CEACGGDGIIKIEMHFLADVYVPCEVC.

Belongs to the ABC transporter superfamily. UvrA family. As to quaternary structure, forms a heterotetramer with UvrB during the search for lesions.

It localises to the cytoplasm. In terms of biological role, the UvrABC repair system catalyzes the recognition and processing of DNA lesions. UvrA is an ATPase and a DNA-binding protein. A damage recognition complex composed of 2 UvrA and 2 UvrB subunits scans DNA for abnormalities. When the presence of a lesion has been verified by UvrB, the UvrA molecules dissociate. This Methanothermobacter thermautotrophicus (strain ATCC 29096 / DSM 1053 / JCM 10044 / NBRC 100330 / Delta H) (Methanobacterium thermoautotrophicum) protein is UvrABC system protein A.